The primary structure comprises 361 residues: Dual specificity mitogen-activated protein kinase kinase 6 (361 aa).

2 stretches are compositionally biased toward basic and acidic residues: residues 1–11 and 37–48; these read MEGGSDKESKV and PKELKLPKEVFE. A disordered region spans residues 1–61; it reads MEGGSDKESK…PAPTPPRDLD (61 aa). Residues 30–46 form a d domain region; it reads VRGKKKLPKELKLPKEV. The Protein kinase domain occupies 80–341; it reads LEQIGELGRG…YTELMQHPFF (262 aa). Residues 86-94 and Lys-109 each bind ATP; that span reads LGRGAYGVV. Asp-206 acts as the Proton acceptor in catalysis. Ser-234 bears the Phosphoserine; by MAPK3 mark. Position 238 is a phosphothreonine; by MAPK3 (Thr-238). The tract at residues 338 to 361 is DVD domain; it reads HPFFTLHDSKDTDVASFVKTILGD.

Belongs to the protein kinase superfamily. STE Ser/Thr protein kinase family. MAP kinase kinase subfamily. As to quaternary structure, dimer. Interacts (via its D domain) with its MAP kinase substrates. Interacts (via its DVD domain) with MAP3Ks activators. Post-translationally, weakly autophosphorylated. Phosphorylated at Ser-234 and Thr-238 by the majority of M3Ks.

The protein localises to the nucleus. The protein resides in the cytoplasm. Its subcellular location is the cytoskeleton. The catalysed reaction is L-seryl-[protein] + ATP = O-phospho-L-seryl-[protein] + ADP + H(+). It catalyses the reaction L-threonyl-[protein] + ATP = O-phospho-L-threonyl-[protein] + ADP + H(+). The enzyme catalyses L-tyrosyl-[protein] + ATP = O-phospho-L-tyrosyl-[protein] + ADP + H(+). Activated by dual phosphorylation on Ser-234 and Thr-238 in response to a variety of cellular stresses, including UV radiation, osmotic shock, hypoxia, inflammatory cytokines, interferon gamma (IFNG), and less often by growth factors. MAP2K6/MKK6 is activated by the majority of M3Ks. In terms of biological role, dual specificity protein kinase which acts as an essential component of the MAP kinase signal transduction pathway. Catalyzes the concomitant phosphorylation of a threonine and a tyrosine residue in the MAP kinases p38 and plays an important role in the regulation of cellular responses to cytokines and all kinds of stresses. The p38 MAP kinase signal transduction pathway leads to direct activation of transcription factors. Phosphorylation by MAP2K6 asymmetrically activates p38 on one side of the blastodisc, an event which is necessary for blastomere cleavage. The sequence is that of Dual specificity mitogen-activated protein kinase kinase 6 from Danio rerio (Zebrafish).